Here is a 159-residue protein sequence, read N- to C-terminus: Cyclic pyranopterin monophosphate synthase (159 aa).

Substrate is bound by residues 75-77 (LCH) and 113-114 (ME). Asp128 is a catalytic residue.

The protein belongs to the MoaC family. In terms of assembly, homohexamer; trimer of dimers.

The catalysed reaction is (8S)-3',8-cyclo-7,8-dihydroguanosine 5'-triphosphate = cyclic pyranopterin phosphate + diphosphate. The protein operates within cofactor biosynthesis; molybdopterin biosynthesis. Catalyzes the conversion of (8S)-3',8-cyclo-7,8-dihydroguanosine 5'-triphosphate to cyclic pyranopterin monophosphate (cPMP). The protein is Cyclic pyranopterin monophosphate synthase of Serratia proteamaculans (strain 568).